A 363-amino-acid polypeptide reads, in one-letter code: tRNA N6-adenosine threonylcarbamoyltransferase (363 aa).

Residues His-121 and His-125 each coordinate Fe cation. Substrate-binding positions include 143–147, Asp-176, Gly-189, and Asn-287; that span reads LASGG. Asp-315 contributes to the Fe cation binding site.

The protein belongs to the KAE1 / TsaD family. Requires Fe(2+) as cofactor.

The protein localises to the cytoplasm. The enzyme catalyses L-threonylcarbamoyladenylate + adenosine(37) in tRNA = N(6)-L-threonylcarbamoyladenosine(37) in tRNA + AMP + H(+). In terms of biological role, required for the formation of a threonylcarbamoyl group on adenosine at position 37 (t(6)A37) in tRNAs that read codons beginning with adenine. Is involved in the transfer of the threonylcarbamoyl moiety of threonylcarbamoyl-AMP (TC-AMP) to the N6 group of A37, together with TsaE and TsaB. TsaD likely plays a direct catalytic role in this reaction. The sequence is that of tRNA N6-adenosine threonylcarbamoyltransferase from Rhodopseudomonas palustris (strain TIE-1).